The chain runs to 101 residues: Protein Tat (101 aa).

A disordered region spans residues 1-20 (MEVVDPNLDPWKHPGSQPET). An interaction with human CREBBP region spans residues 1-24 (MEVVDPNLDPWKHPGSQPETPCNK). The transactivation stretch occupies residues 1-48 (MEVVDPNLDPWKHPGSQPETPCNKCYCKKCCFHCQLCFTRKGLGISYG). Positions 22, 25, and 27 each coordinate Zn(2+). A cysteine-rich region spans residues 22-37 (CNKCYCKKCCFHCQLC). Lys-28 is modified (N6-acetyllysine; by host PCAF). Residues Cys-30, His-33, Cys-34, and Cys-37 each coordinate Zn(2+). Residues 38–48 (FTRKGLGISYG) are core. The interval 47 to 101 (YGRKKRRQRRRTPQSGEVHQDPVSKQPLSQTRGDPKGPEESKKKVESKTKTDPSD) is disordered. A compositionally biased stretch (basic residues) spans 48–58 (GRKKRRQRRRT). The Nuclear localization signal, RNA-binding (TAR), and protein transduction motif lies at 49-57 (RKKRRQRRR). An interaction with the host capping enzyme RNGTT region spans residues 49-86 (RKKRRQRRRTPQSGEVHQDPVSKQPLSQTRGDPKGPEE). Lys-50 and Lys-51 each carry N6-acetyllysine; by host EP300 and GCN5L2. Arg-52 and Arg-53 each carry asymmetric dimethylarginine; by host PRMT6. Lys-71 is covalently cross-linked (Glycyl lysine isopeptide (Lys-Gly) (interchain with G-Cter in ubiquitin)). The short motif at 78–80 (RGD) is the Cell attachment site element. Positions 79–101 (GDPKGPEESKKKVESKTKTDPSD) are enriched in basic and acidic residues.

This sequence belongs to the lentiviruses Tat family. Interacts with host CCNT1. Associates with the P-TEFb complex composed at least of Tat, P-TEFb (CDK9 and CCNT1), TAR RNA, RNA Pol II. Recruits the HATs CREBBP, TAF1/TFIID, EP300, PCAF and GCN5L2. Interacts with host KAT5/Tip60; this interaction targets the latter to degradation. Interacts with the host deacetylase SIRT1. Interacts with host capping enzyme RNGTT; this interaction stimulates RNGTT. Binds to host KDR, and to the host integrins ITGAV/ITGB3 and ITGA5/ITGB1. Interacts with host KPNB1/importin beta-1 without previous binding to KPNA1/importin alpha-1. Interacts with EIF2AK2. Interacts with host nucleosome assembly protein NAP1L1; this interaction may be required for the transport of Tat within the nucleus, since the two proteins interact at the nuclear rim. Interacts with host C1QBP/SF2P32; this interaction involves lysine-acetylated Tat. Interacts with the host chemokine receptors CCR2, CCR3 and CXCR4. Interacts with host DPP4/CD26; this interaction may trigger an anti-proliferative effect. Interacts with host LDLR. Interacts with the host extracellular matrix metalloproteinase MMP1. Interacts with host PRMT6; this interaction mediates Tat's methylation. Interacts with, and is ubiquitinated by MDM2/Hdm2. Interacts with host PSMC3 and HTATIP2. Interacts with STAB1; this interaction may overcome SATB1-mediated repression of IL2 and IL2RA (interleukin) in T cells by binding to the same domain than HDAC1. Interacts (when acetylated) with human CDK13, thereby increasing HIV-1 mRNA splicing and promoting the production of the doubly spliced HIV-1 protein Nef. Interacts with host TBP; this interaction modulates the activity of transcriptional pre-initiation complex. Interacts with host RELA. Interacts with host PLSCR1; this interaction negatively regulates Tat transactivation activity by altering its subcellular distribution. In terms of processing, asymmetrical arginine methylation by host PRMT6 seems to diminish the transactivation capacity of Tat and affects the interaction with host CCNT1. Acetylation by EP300, CREBBP, GCN5L2/GCN5 and PCAF regulates the transactivation activity of Tat. EP300-mediated acetylation of Lys-50 promotes dissociation of Tat from the TAR RNA through the competitive binding to PCAF's bromodomain. In addition, the non-acetylated Tat's N-terminus can also interact with PCAF. PCAF-mediated acetylation of Lys-28 enhances Tat's binding to CCNT1. Lys-50 is deacetylated by SIRT1. Post-translationally, polyubiquitination by host MDM2 does not target Tat to degradation, but activates its transactivation function and fosters interaction with CCNT1 and TAR RNA. In terms of processing, phosphorylated by EIF2AK2 on serine and threonine residues adjacent to the basic region important for TAR RNA binding and function. Phosphorylation of Tat by EIF2AK2 is dependent on the prior activation of EIF2AK2 by dsRNA.

Its subcellular location is the host nucleus. It is found in the host nucleolus. The protein localises to the host cytoplasm. It localises to the secreted. In terms of biological role, transcriptional activator that increases RNA Pol II processivity, thereby increasing the level of full-length viral transcripts. Recognizes a hairpin structure at the 5'-LTR of the nascent viral mRNAs referred to as the transactivation responsive RNA element (TAR) and recruits the cyclin T1-CDK9 complex (P-TEFb complex) that will in turn hyperphosphorylate the RNA polymerase II to allow efficient elongation. The CDK9 component of P-TEFb and other Tat-activated kinases hyperphosphorylate the C-terminus of RNA Pol II that becomes stabilized and much more processive. Other factors such as HTATSF1/Tat-SF1, SUPT5H/SPT5, and HTATIP2 are also important for Tat's function. Besides its effect on RNA Pol II processivity, Tat induces chromatin remodeling of proviral genes by recruiting the histone acetyltransferases (HATs) CREBBP, EP300 and PCAF to the chromatin. This also contributes to the increase in proviral transcription rate, especially when the provirus integrates in transcriptionally silent region of the host genome. To ensure maximal activation of the LTR, Tat mediates nuclear translocation of NF-kappa-B by interacting with host RELA. Through its interaction with host TBP, Tat may also modulate transcription initiation. Tat can reactivate a latently infected cell by penetrating in it and transactivating its LTR promoter. In the cytoplasm, Tat is thought to act as a translational activator of HIV-1 mRNAs. Its function is as follows. Extracellular circulating Tat can be endocytosed by surrounding uninfected cells via the binding to several surface receptors such as CD26, CXCR4, heparan sulfate proteoglycans (HSPG) or LDLR. Neurons are rarely infected, but they internalize Tat via their LDLR. Through its interaction with nuclear HATs, Tat is potentially able to control the acetylation-dependent cellular gene expression. Modulates the expression of many cellular genes involved in cell survival, proliferation or in coding for cytokines or cytokine receptors. Tat plays a role in T-cell and neurons apoptosis. Tat induced neurotoxicity and apoptosis probably contribute to neuroAIDS. Circulating Tat also acts as a chemokine-like and/or growth factor-like molecule that binds to specific receptors on the surface of the cells, affecting many cellular pathways. In the vascular system, Tat binds to ITGAV/ITGB3 and ITGA5/ITGB1 integrins dimers at the surface of endothelial cells and competes with bFGF for heparin-binding sites, leading to an excess of soluble bFGF. This chain is Protein Tat, found in Homo sapiens (Human).